A 353-amino-acid polypeptide reads, in one-letter code: Uroporphyrinogen decarboxylase (353 aa).

Substrate is bound by residues 27–31, phenylalanine 46, aspartate 76, tyrosine 152, serine 207, and histidine 321; that span reads RQAGR.

Belongs to the uroporphyrinogen decarboxylase family. In terms of assembly, homodimer.

Its subcellular location is the cytoplasm. It catalyses the reaction uroporphyrinogen III + 4 H(+) = coproporphyrinogen III + 4 CO2. Its pathway is porphyrin-containing compound metabolism; protoporphyrin-IX biosynthesis; coproporphyrinogen-III from 5-aminolevulinate: step 4/4. Its function is as follows. Catalyzes the decarboxylation of four acetate groups of uroporphyrinogen-III to yield coproporphyrinogen-III. The polypeptide is Uroporphyrinogen decarboxylase (Listeria monocytogenes serotype 4b (strain CLIP80459)).